The sequence spans 588 residues: Snake venom 5'-nucleotidase (588 aa).

An N-terminal signal peptide occupies residues 1 to 40 (MQTPKRRRGAQGCPRSSPSPPLLLLVGAVWFCAALSVAAG). Zn(2+)-binding residues include D51 and H53. C66 and C71 are joined by a disulfide. Residue N88 is glycosylated (N-linked (GlcNAc...) asparagine). Zn(2+) is bound by residues D99 and N131. N167 carries an N-linked (GlcNAc...) asparagine glycan. The Zn(2+) site is built by H234 and H257. N327, N347, and N361 each carry an N-linked (GlcNAc...) asparagine glycan. Cystine bridges form between C367/C372 and C379/C401. Residue R368 coordinates AMP. Residues N404 and R409 each coordinate AMP. The N-linked (GlcNAc...) asparagine glycan is linked to N418. F432 contributes to the AMP binding site. The cysteines at positions 491 and 494 are disulfide-linked. Residues F515 and D521 each contribute to the AMP site. A glycan (N-linked (GlcNAc...) asparagine) is linked at N532. Residue S564 is the site of GPI-anchor amidated serine attachment. Residues 565-588 (AGTLFQAQLFLTWGLCISLLYFIL) constitute a propeptide, removed in mature form.

It belongs to the 5'-nucleotidase family. Zn(2+) is required as a cofactor. Post-translationally, venom 5'-nucleotidases (or a part thereof) may be released into the venom via exosome-like vesicles. They may be attached via a GPI anchor to the membrane of these vesicles. Soluble forms of 5'-nucleotidase might be released by cleavage of the ectodomain in the exosome-like vesicles or venom gland cells. In terms of tissue distribution, expressed by the venom gland.

The protein localises to the membrane. The enzyme catalyses a ribonucleoside 5'-phosphate + H2O = a ribonucleoside + phosphate. In terms of biological role, hydrolyzes nucleotides into nucleosides. Snake venom 5'-nucleotidases are widely distributed among venomous snake taxa, but there is a lack of information about their biological activities. They have been shown to inhibit platelet aggregation. This effect may be due to the liberation of inhibitory AMP or adenosine by its action on ADP released upon initiation of aggregation. Venom 5'-nucleotidases are also known to synergistically act in vivo with other toxins like ADPases, phospholipases, and disintegrins to exert a more pronounced anti-coagulant effect. In Gloydius brevicauda (Korean slamosa snake), this protein is Snake venom 5'-nucleotidase.